Here is a 314-residue protein sequence, read N- to C-terminus: Coproporphyrin III ferrochelatase (314 aa).

Residues H186 and E268 each contribute to the Fe(2+) site.

It belongs to the ferrochelatase family.

It is found in the cytoplasm. The catalysed reaction is Fe-coproporphyrin III + 2 H(+) = coproporphyrin III + Fe(2+). The protein operates within porphyrin-containing compound metabolism; protoheme biosynthesis. Functionally, involved in coproporphyrin-dependent heme b biosynthesis. Catalyzes the insertion of ferrous iron into coproporphyrin III to form Fe-coproporphyrin III. The protein is Coproporphyrin III ferrochelatase of Lactococcus lactis subsp. lactis (strain IL1403) (Streptococcus lactis).